Reading from the N-terminus, the 317-residue chain is Olfactory receptor 2F2 (317 aa).

Residues 1–25 (MEIDNQTWVREFILLGLSSDWCTQI) lie on the Extracellular side of the membrane. N-linked (GlcNAc...) asparagine glycosylation occurs at asparagine 5. A helical membrane pass occupies residues 26–49 (SLFSLFLVTYLMTVLGNCLIVLLI). The Cytoplasmic portion of the chain corresponds to 50–57 (RLDSRLHT). A helical membrane pass occupies residues 58–79 (PMYFFLTNLSLVDVSYATSVVP). Over 80–100 (QLLAHFLAEHKAIPFQSCAAQ) the chain is Extracellular. Residues cysteine 97 and cysteine 189 are joined by a disulfide bond. The chain crosses the membrane as a helical span at residues 101–120 (LFFSLALGGIEFVLLAVMAY). At 121–139 (DRHVAVSDRLRYSAIMHGG) the chain is on the cytoplasmic side. A helical membrane pass occupies residues 140-158 (LCARLAITSWVSGSINSLV). Over 159 to 195 (QTAITFQLPMCTNKFIDHISCELLAVVRLACVDTSSN) the chain is Extracellular. A helical membrane pass occupies residues 196–219 (EAAIMVSSIVLLMTPFCLVLLSYI). The Cytoplasmic segment spans residues 220-236 (RIISTILKIQSREGRKK). The chain crosses the membrane as a helical span at residues 237 to 259 (AFHTCASHLTVVALCYGTTIFTY). At 260–272 (IQPHSGPSVLQEK) the chain is on the extracellular side. Residues 273–292 (LISVFYAIVMPLLNPVIYSL) traverse the membrane as a helical segment. At 293 to 317 (RNKEVKGAWHKLLEKFSGLTSKLGT) the chain is on the cytoplasmic side.

Belongs to the G-protein coupled receptor 1 family.

It localises to the cell membrane. In terms of biological role, odorant receptor. This is Olfactory receptor 2F2 (OR2F2) from Homo sapiens (Human).